Consider the following 204-residue polypeptide: Recombination protein RecR (204 aa).

A C4-type zinc finger spans residues 63–78; that stretch reads CNRCFNITVEDPCTIC. The Toprim domain maps to 86–181; the sequence is RQVCVVEEPL…RVTRLARGLP (96 aa).

It belongs to the RecR family.

In terms of biological role, may play a role in DNA repair. It seems to be involved in an RecBC-independent recombinational process of DNA repair. It may act with RecF and RecO. The chain is Recombination protein RecR from Herpetosiphon aurantiacus (strain ATCC 23779 / DSM 785 / 114-95).